Reading from the N-terminus, the 707-residue chain is Acyl-CoA ligase 891, peroxisomal (707 aa).

259–270 (INYTSGTTGPPK) contributes to the ATP binding site. Positions 525–549 (DGWFRTGDVCTVDAQGRFIIIDRRK) are fatty acid-binding. Positions 705-707 (AKL) match the Peroxisome targeting signal motif.

Belongs to the ATP-dependent AMP-binding enzyme family.

It is found in the peroxisome matrix. The enzyme catalyses (4E,8E)-10-(4-hydroxy-6-methoxy-7-methyl-3-oxo-1,3-dihydro-2-benzofuran-5-yl)-4,8-dimethyldeca-4,8-dienoate + ATP + CoA = (4E,8E)-10-(4-hydroxy-6-methoxy-7-methyl-3-oxo-1,3-dihydro-2-benzofuran-5-yl)-4,8-dimethyldeca-4,8-dienoyl-CoA + AMP + diphosphate. It participates in secondary metabolite biosynthesis; terpenoid biosynthesis. Functionally, acyl-CoA ligase involved in the biosynthesis of mycophenolic acid (MPA), the first isolated antibiotic natural product in the world obtained from a culture of Penicillium brevicompactum in 1893. The peroxisomal acyl-CoA ligase 891 converts the intermediate MFDHMP-3C into MFDHMP-3C-CoA which impairs its diffusion from the peroxisome. The first step of the pathway is the synthesis of 5-methylorsellinic acid (5MOA) by the cytosolic polyketide synthase mpaC. 5MOA is then converted to the phthalide compound 5,7-dihydroxy-4,6-dimethylphthalide (DHMP) by the endoplasmic reticulum-bound cytochrome P450 monooxygenase mpaDE. MpaDE first catalyzes hydroxylation of 5-MOA to 4,6-dihydroxy-2-(hydroxymethyl)-3-methylbenzoic acid (DHMB). MpaDE then acts as a lactone synthase that catalyzes the ring closure to convert DHMB into DHMP. The next step is the prenylation of DHMP by the Golgi apparatus-associated prenyltransferase mpaA to yield farnesyl-DHMP (FDHMP). The ER-bound oxygenase mpaB then mediates the oxidative cleavage the C19-C20 double bond in FDHMP to yield FDHMP-3C via a mycophenolic aldehyde intermediate. The O-methyltransferase mpaG catalyzes the methylation of FDHMP-3C to yield MFDHMP-3C. After the cytosolic methylation of FDHMP-3C, MFDHMP-3C enters into peroxisomes probably via free diffusion due to its low molecular weight. Upon a peroxisomal CoA ligation reaction, catalyzed by a beta-oxidation component enzyme acyl-CoA ligase ACL891, MFDHMP-3C-CoA would then be restricted to peroxisomes for the following beta-oxidation pathway steps. The peroxisomal beta-oxidation machinery than converts MFDHMP-3C-CoA into MPA_CoA, via a beta-oxidation chain-shortening process. Finally mpaH acts as a peroxisomal acyl-CoA hydrolase with high substrate specificity toward MPA-CoA to release the final product MPA. In Penicillium brevicompactum, this protein is Acyl-CoA ligase 891, peroxisomal.